The sequence spans 1723 residues: Probable outer membrane protein pmp20 (1723 aa).

Residues 1-21 (MKWLPATAVFAAVLPALTAFG) form the signal peptide. 2 disordered regions span residues 78–100 (VTPDANDSSSNSSKGGSSSSGAT) and 139–161 (LSSSSSGGSSSSSSSSSSGSASA). Composition is skewed to low complexity over residues 85–100 (SSSNSSKGGSSSSGAT) and 140–161 (SSSSSGGSSSSSSSSSSGSASA). Positions 1434–1723 (EDPAFNNFWA…MANGGIRFVF (290 aa)) constitute an Autotransporter domain.

This sequence belongs to the PMP outer membrane protein family.

It localises to the secreted. Its subcellular location is the cell wall. It is found in the cell outer membrane. This Chlamydia pneumoniae (Chlamydophila pneumoniae) protein is Probable outer membrane protein pmp20 (pmp20).